A 691-amino-acid polypeptide reads, in one-letter code: Elongation factor G (691 aa).

Residues 8 to 282 (ERVRNIGIAA…AVVDYLPAPI (275 aa)) enclose the tr-type G domain. GTP contacts are provided by residues 17-24 (AHIDAGKT), 81-85 (DTPGH), and 135-138 (NKMD).

It belongs to the TRAFAC class translation factor GTPase superfamily. Classic translation factor GTPase family. EF-G/EF-2 subfamily.

The protein localises to the cytoplasm. Its function is as follows. Catalyzes the GTP-dependent ribosomal translocation step during translation elongation. During this step, the ribosome changes from the pre-translocational (PRE) to the post-translocational (POST) state as the newly formed A-site-bound peptidyl-tRNA and P-site-bound deacylated tRNA move to the P and E sites, respectively. Catalyzes the coordinated movement of the two tRNA molecules, the mRNA and conformational changes in the ribosome. The polypeptide is Elongation factor G (Synechococcus sp. (strain CC9902)).